A 132-amino-acid polypeptide reads, in one-letter code: Small ribosomal subunit protein uS8 (132 aa).

The protein belongs to the universal ribosomal protein uS8 family. As to quaternary structure, part of the 30S ribosomal subunit. Contacts proteins S5 and S12.

One of the primary rRNA binding proteins, it binds directly to 16S rRNA central domain where it helps coordinate assembly of the platform of the 30S subunit. In Brucella abortus (strain S19), this protein is Small ribosomal subunit protein uS8.